Reading from the N-terminus, the 882-residue chain is Cutinase transcription factor 1 beta (882 aa).

Over residues Met-1–Ala-20 the composition is skewed to low complexity. Positions Met-1–Ala-49 are disordered. The segment at residues Cys-53 to Cys-81 is a DNA-binding region (zn(2)-C6 fungal-type). The tract at residues Asn-117–Ser-148 is disordered. Low complexity predominate over residues Ser-130–Ser-139.

It is found in the nucleus. This chain is Cutinase transcription factor 1 beta (CTF1-BETA), found in Fusarium vanettenii (Neocosmospora pisi).